Here is a 31-residue protein sequence, read N- to C-terminus: Bacteriocin leucocin-B (31 aa).

Its subcellular location is the secreted. Its function is as follows. Inhibits a wide spectrum of lactic acid bacteria. The protein is Bacteriocin leucocin-B of Leuconostoc mesenteroides.